Reading from the N-terminus, the 79-residue chain is Pyridoxal 5'-phosphate synthase PDX1-like 4 (79 aa).

This sequence belongs to the PdxS/SNZ family.

The chain is Pyridoxal 5'-phosphate synthase PDX1-like 4 (PDX1L4) from Arabidopsis thaliana (Mouse-ear cress).